A 406-amino-acid polypeptide reads, in one-letter code: Homocysteine-responsive endoplasmic reticulum-resident ubiquitin-like domain member 2 protein (406 aa).

Residues 10–89 (VTLIIKAPNQ…HMVHLVCTSR (80 aa)) enclose the Ubiquitin-like domain. The interval 86 to 156 (CTSRTPPSSP…PQAQTDPAQS (71 aa)) is disordered. Low complexity-rich tracts occupy residues 87–98 (TSRTPPSSPKSS) and 109–139 (SNSN…SSSE). Residues 145–156 (TLPQAQTDPAQS) show a composition bias toward polar residues. A helical transmembrane segment spans residues 302 to 322 (FIMVMGAMLLVYLHQAGWFPF).

The protein localises to the membrane. In terms of biological role, could be involved in the unfolded protein response (UPR) pathway. The chain is Homocysteine-responsive endoplasmic reticulum-resident ubiquitin-like domain member 2 protein (HERPUD2) from Bos taurus (Bovine).